Here is a 271-residue protein sequence, read N- to C-terminus: Thiazole synthase (271 aa).

The active-site Schiff-base intermediate with DXP is Lys-104. Residues Gly-165, 192–193, and 214–215 contribute to the 1-deoxy-D-xylulose 5-phosphate site; these read AG and NT.

Belongs to the ThiG family. In terms of assembly, homotetramer. Forms heterodimers with either ThiH or ThiS.

It is found in the cytoplasm. The catalysed reaction is [ThiS sulfur-carrier protein]-C-terminal-Gly-aminoethanethioate + 2-iminoacetate + 1-deoxy-D-xylulose 5-phosphate = [ThiS sulfur-carrier protein]-C-terminal Gly-Gly + 2-[(2R,5Z)-2-carboxy-4-methylthiazol-5(2H)-ylidene]ethyl phosphate + 2 H2O + H(+). It participates in cofactor biosynthesis; thiamine diphosphate biosynthesis. In terms of biological role, catalyzes the rearrangement of 1-deoxy-D-xylulose 5-phosphate (DXP) to produce the thiazole phosphate moiety of thiamine. Sulfur is provided by the thiocarboxylate moiety of the carrier protein ThiS. In vitro, sulfur can be provided by H(2)S. The sequence is that of Thiazole synthase from Burkholderia mallei (strain ATCC 23344).